A 459-amino-acid chain; its full sequence is Phosphomethylpyrimidine synthase (459 aa).

Residues Asn-80, Met-109, Tyr-139, His-175, 195 to 197 (SRG), 236 to 239 (DSLR), and Glu-275 contribute to the substrate site. A Zn(2+)-binding site is contributed by His-279. Tyr-302 contributes to the substrate binding site. Residue His-343 participates in Zn(2+) binding. [4Fe-4S] cluster contacts are provided by Cys-423, Cys-426, and Cys-431.

This sequence belongs to the ThiC family. The cofactor is [4Fe-4S] cluster.

The catalysed reaction is 5-amino-1-(5-phospho-beta-D-ribosyl)imidazole + S-adenosyl-L-methionine = 4-amino-2-methyl-5-(phosphooxymethyl)pyrimidine + CO + 5'-deoxyadenosine + formate + L-methionine + 3 H(+). It functions in the pathway cofactor biosynthesis; thiamine diphosphate biosynthesis. Catalyzes the synthesis of the hydroxymethylpyrimidine phosphate (HMP-P) moiety of thiamine from aminoimidazole ribotide (AIR) in a radical S-adenosyl-L-methionine (SAM)-dependent reaction. The sequence is that of Phosphomethylpyrimidine synthase from Prochlorococcus marinus (strain MIT 9211).